The primary structure comprises 359 residues: Peptide chain release factor 1 (359 aa).

Q234 carries the N5-methylglutamine modification. Positions 283–305 are disordered; that stretch reads SQKDAARAADRRAQVGSGDRSER.

This sequence belongs to the prokaryotic/mitochondrial release factor family. Post-translationally, methylated by PrmC. Methylation increases the termination efficiency of RF1.

The protein localises to the cytoplasm. In terms of biological role, peptide chain release factor 1 directs the termination of translation in response to the peptide chain termination codons UAG and UAA. In Methylobacterium nodulans (strain LMG 21967 / CNCM I-2342 / ORS 2060), this protein is Peptide chain release factor 1.